The chain runs to 161 residues: Phosphopantetheine adenylyltransferase (161 aa).

S11 provides a ligand contact to substrate. ATP is bound by residues 11–12 and H19; that span reads SF. 3 residues coordinate substrate: K43, L75, and R89. ATP is bound by residues 90–92, E100, and 125–131; these read GLR and YSYLSSS.

The protein belongs to the bacterial CoaD family. In terms of assembly, homohexamer. The cofactor is Mg(2+).

Its subcellular location is the cytoplasm. It carries out the reaction (R)-4'-phosphopantetheine + ATP + H(+) = 3'-dephospho-CoA + diphosphate. Its pathway is cofactor biosynthesis; coenzyme A biosynthesis; CoA from (R)-pantothenate: step 4/5. Its function is as follows. Reversibly transfers an adenylyl group from ATP to 4'-phosphopantetheine, yielding dephospho-CoA (dPCoA) and pyrophosphate. This is Phosphopantetheine adenylyltransferase from Geotalea daltonii (strain DSM 22248 / JCM 15807 / FRC-32) (Geobacter daltonii).